Consider the following 149-residue polypeptide: Large ribosomal subunit protein bL9 (149 aa).

Belongs to the bacterial ribosomal protein bL9 family.

Its function is as follows. Binds to the 23S rRNA. The protein is Large ribosomal subunit protein bL9 of Alkaliphilus metalliredigens (strain QYMF).